A 285-amino-acid polypeptide reads, in one-letter code: Non-structural protein 3c (285 aa).

The chain is Non-structural protein 3c from Bat coronavirus 133/2005 (BtCoV).